Reading from the N-terminus, the 498-residue chain is MFSLQEICRKNIYFLPDWLSEHVIQRLGLYWEKHGSLQRIGDDYVLIQQDLIIPINEALRMAGEEGNDEVVQLLLLWEGNIHYAIIGALEGDHYSLIRKLYDQIKDCHNILPLIQDPKTFEKCHELDESCNISCLVLHAVKNDMLCILQEYKMRLSGGDIQEVFETACRSQKYDIVTWMGENIAIYNPGVVFDIAFDLMNVSLLSIGYTLLFNHHINNMNENIDSLLAQHLEWAAGMGLLHFMLETLKYGGDVTITVLSEAVKYDHRKVLDYFLRRKNLYQEDLEELLLLAIRADCSKKTLNLLLSYLNYSINNIRKKILQCVKEYETTIIIKILWKRKINLIGPILADFIGYHSYTYMVDFMREFSIHPEKMIKMAARESREDLIIKFSKNVYKEPKDRLHYLKSLVYTMRHKEGKQLLIYTIHNLYKACHLESKEMFNLARFYARHNAVIQFKSICHDLSKLNINIKNLLLECLRIAIKKNYPQLIRTIKTDMSYE.

This sequence belongs to the asfivirus MGF 505 family.

Functionally, plays a role in virus cell tropism, and may be required for efficient virus replication in macrophages. In Ornithodoros (relapsing fever ticks), this protein is Protein MGF 505-5R.